Reading from the N-terminus, the 425-residue chain is Serine--tRNA ligase (425 aa).

235 to 237 (TAE) contributes to the L-serine binding site. Position 266-268 (266-268 (RSE)) interacts with ATP. Residue Glu289 coordinates L-serine. An ATP-binding site is contributed by 353-356 (EISS). Ser389 is an L-serine binding site.

Belongs to the class-II aminoacyl-tRNA synthetase family. Type-1 seryl-tRNA synthetase subfamily. In terms of assembly, homodimer. The tRNA molecule binds across the dimer.

It localises to the cytoplasm. It catalyses the reaction tRNA(Ser) + L-serine + ATP = L-seryl-tRNA(Ser) + AMP + diphosphate + H(+). The enzyme catalyses tRNA(Sec) + L-serine + ATP = L-seryl-tRNA(Sec) + AMP + diphosphate + H(+). The protein operates within aminoacyl-tRNA biosynthesis; selenocysteinyl-tRNA(Sec) biosynthesis; L-seryl-tRNA(Sec) from L-serine and tRNA(Sec): step 1/1. Its function is as follows. Catalyzes the attachment of serine to tRNA(Ser). Is also able to aminoacylate tRNA(Sec) with serine, to form the misacylated tRNA L-seryl-tRNA(Sec), which will be further converted into selenocysteinyl-tRNA(Sec). The sequence is that of Serine--tRNA ligase from Desulfotalea psychrophila (strain LSv54 / DSM 12343).